A 160-amino-acid polypeptide reads, in one-letter code: Transcription elongation factor GreA (160 aa).

A coiled-coil region spans residues 3 to 84; the sequence is NIVDDKILLT…SKAKIIKADL (82 aa).

This sequence belongs to the GreA/GreB family.

In terms of biological role, necessary for efficient RNA polymerase transcription elongation past template-encoded arresting sites. The arresting sites in DNA have the property of trapping a certain fraction of elongating RNA polymerases that pass through, resulting in locked ternary complexes. Cleavage of the nascent transcript by cleavage factors such as GreA or GreB allows the resumption of elongation from the new 3'terminus. GreA releases sequences of 2 to 3 nucleotides. The polypeptide is Transcription elongation factor GreA (Mesomycoplasma hyopneumoniae (strain J / ATCC 25934 / NCTC 10110) (Mycoplasma hyopneumoniae)).